The following is a 412-amino-acid chain: ORC1-type DNA replication protein 2 (412 aa).

ATP contacts are provided by residues 61–65 (VGKTA), Tyr207, and Arg219.

The protein belongs to the CDC6/cdc18 family.

Its function is as follows. Involved in regulation of DNA replication. This Haloarcula marismortui (strain ATCC 43049 / DSM 3752 / JCM 8966 / VKM B-1809) (Halobacterium marismortui) protein is ORC1-type DNA replication protein 2 (cdc6b).